Reading from the N-terminus, the 142-residue chain is Large ribosomal subunit protein uL11 (142 aa).

The tract at residues 86 to 105 (LKSGSKEPGKQSAGQISRAK) is disordered.

It belongs to the universal ribosomal protein uL11 family. Part of the ribosomal stalk of the 50S ribosomal subunit. Interacts with L10 and the large rRNA to form the base of the stalk. L10 forms an elongated spine to which L12 dimers bind in a sequential fashion forming a multimeric L10(L12)X complex. Post-translationally, one or more lysine residues are methylated.

In terms of biological role, forms part of the ribosomal stalk which helps the ribosome interact with GTP-bound translation factors. This is Large ribosomal subunit protein uL11 from Chelativorans sp. (strain BNC1).